A 200-amino-acid polypeptide reads, in one-letter code: Transcription factor FapR (200 aa).

It belongs to the FapR family.

In terms of biological role, transcriptional factor involved in regulation of membrane lipid biosynthesis by repressing genes involved in fatty acid and phospholipid metabolism. This chain is Transcription factor FapR, found in Thermoanaerobacter pseudethanolicus (strain ATCC 33223 / 39E) (Clostridium thermohydrosulfuricum).